The sequence spans 361 residues: Solute carrier family 25 member 3 (361 aa).

The N-terminal 49 residues, 1 to 49 (MFSSVAHLARANPFNTPHLQLVHDGLGDFRSRPPGPTGQPRRPRNLAAA), are a transit peptide targeting the mitochondrion. The disordered stretch occupies residues 25–44 (GLGDFRSRPPGPTGQPRRPR). The Mitochondrial intermembrane portion of the chain corresponds to 50–62 (AVEEYSCEFGSAK). Solcar repeat units follow at residues 62 to 146 (KYYA…FKVL), 159 to 243 (WRTS…TVEA), and 260 to 338 (EQLV…VKVY). Residues 63–85 (YYALCGFGGVLSCGLTHTAVVPL) form a helical membrane-spanning segment. Residues 86 to 120 (DLVKCRMQVDPQKYKGIFNGFSVTLKEDGVRGLAK) are Mitochondrial matrix-facing. K98 is subject to N6-acetyllysine. K111 is subject to N6-methyllysine. A helical transmembrane segment spans residues 121 to 140 (GWAPTFLGYSMQGLCKFGFY). At 141 to 160 (EVFKVLYSNMLGEENTYLWR) the chain is on the mitochondrial intermembrane side. The chain crosses the membrane as a helical span at residues 161-182 (TSLYLAASASAEFFADIALAPM). Topologically, residues 183–217 (EAAKVRIQTQPGYANTLRDAAPKMYKEEGLKAFYK) are mitochondrial matrix. Phosphotyrosine is present on Y195. Position 208 is an N6-acetyllysine (K208). A helical transmembrane segment spans residues 218-237 (GVAPLWMRQIPYTMMKFACF). Residues 238–260 (ERTVEALYKFVVPKPRSECSKPE) are Mitochondrial intermembrane-facing. A helical membrane pass occupies residues 261 to 283 (QLVVTFVAGYIAGVFCAIVSHPA). Residues 284-313 (DSVVSVLNKEKGSSASLVLKRLGFKGVWKG) lie on the Mitochondrial matrix side of the membrane. A helical transmembrane segment spans residues 314 to 332 (LFARIIMIGTLTALQWFIY). Topologically, residues 333 to 361 (DSVKVYFRLPRPPPPEMPESLKKKLGLTQ) are mitochondrial intermembrane.

Belongs to the mitochondrial carrier (TC 2.A.29) family. In terms of assembly, interacts with PPIF; the interaction is impaired by CsA.

It localises to the mitochondrion inner membrane. The enzyme catalyses phosphate(in) + H(+)(in) = phosphate(out) + H(+)(out). Functionally, inorganic ion transporter that transports phosphate or copper ions across the mitochondrial inner membrane into the matrix compartment. Mediates proton-coupled symport of phosphate ions necessary for mitochondrial oxidative phosphorylation of ADP to ATP. Transports copper ions probably in the form of anionic copper(I) complexes to maintain mitochondrial matrix copper pool and to supply copper for cytochrome C oxidase complex assembly. May also play a role in regulation of the mitochondrial permeability transition pore (mPTP). The sequence is that of Solute carrier family 25 member 3 from Pongo abelii (Sumatran orangutan).